A 514-amino-acid polypeptide reads, in one-letter code: Peptide chain release factor 3 (514 aa).

The tr-type G domain maps to 8–268 (KKRRTFAIIS…TFLEFAPEPH (261 aa)). Residues 17–24 (SHPDAGKT), 85–89 (DTPGH), and 139–142 (NKLD) each bind GTP.

The protein belongs to the TRAFAC class translation factor GTPase superfamily. Classic translation factor GTPase family. PrfC subfamily.

Its subcellular location is the cytoplasm. In terms of biological role, increases the formation of ribosomal termination complexes and stimulates activities of RF-1 and RF-2. It binds guanine nucleotides and has strong preference for UGA stop codons. It may interact directly with the ribosome. The stimulation of RF-1 and RF-2 is significantly reduced by GTP and GDP, but not by GMP. The polypeptide is Peptide chain release factor 3 (Streptococcus pyogenes serotype M5 (strain Manfredo)).